Here is a 194-residue protein sequence, read N- to C-terminus: Ion-translocating oxidoreductase complex subunit B (194 aa).

Residues 1–26 (MSSILIAVIAIAALALVFGLILGFAS) form a hydrophobic region. Residues 32–90 (ESDPIVEQIDAILPQTQCGQCGYPGCKPYAEAIANGDMINKCPPGGQATIEKLADLMGV) enclose the 4Fe-4S domain. Residues Cys49, Cys52, Cys57, Cys73, Cys114, Cys117, Cys120, Cys124, Cys144, Cys147, Cys150, and Cys154 each coordinate [4Fe-4S] cluster. 2 4Fe-4S ferredoxin-type domains span residues 105-134 (KVAFIHEDMCIGCTKCIQACPVDAIVGGTK) and 135-164 (ALHTVIESECTGCDLCVAPCPTDCIEMIPV).

This sequence belongs to the 4Fe4S bacterial-type ferredoxin family. RnfB subfamily. In terms of assembly, the complex is composed of six subunits: RnfA, RnfB, RnfC, RnfD, RnfE and RnfG. Requires [4Fe-4S] cluster as cofactor.

The protein resides in the cell inner membrane. Part of a membrane-bound complex that couples electron transfer with translocation of ions across the membrane. This is Ion-translocating oxidoreductase complex subunit B from Aliivibrio fischeri (strain ATCC 700601 / ES114) (Vibrio fischeri).